The sequence spans 454 residues: Probable xylan O-acetyltransferase 9 (454 aa).

Residues 1-15 are Cytoplasmic-facing; the sequence is MKAPPPPSPVAKRAR. Residues 16–36 form a helical; Signal-anchor for type II membrane protein membrane-spanning segment; the sequence is VSPFVFLLVLFLLLFSFLYGE. Residues 37-454 lie on the Lumenal side of the membrane; that stretch reads DLKELLGSQA…ELLYTKLFYP (418 aa). 4 disulfide bridges follow: Cys101-Cys152, Cys123-Cys188, Cys132-Cys435, and Cys352-Cys431. Positions 175–177 match the GDS motif motif; the sequence is GDS. The active-site Nucleophile is the Ser177. Asn219, Asn293, and Asn394 each carry an N-linked (GlcNAc...) asparagine glycan. The Proton donor role is filled by Asp430. The DXXH motif signature appears at 430-433; that stretch reads DCVH. His433 serves as the catalytic Proton acceptor.

It belongs to the PC-esterase family. TBL subfamily.

The protein resides in the golgi apparatus membrane. In terms of biological role, probable xylan acetyltransferase required for 2-O- and 3-O-monoacetylation of xylosyl residues in xylan. Possesses extremely low activity in vitro. This is Probable xylan O-acetyltransferase 9 from Oryza sativa subsp. japonica (Rice).